The sequence spans 275 residues: tRNA pseudouridine synthase B (275 aa).

D38 functions as the Nucleophile in the catalytic mechanism.

This sequence belongs to the pseudouridine synthase TruB family. Type 1 subfamily.

It catalyses the reaction uridine(55) in tRNA = pseudouridine(55) in tRNA. Responsible for synthesis of pseudouridine from uracil-55 in the psi GC loop of transfer RNAs. This Nitratiruptor sp. (strain SB155-2) protein is tRNA pseudouridine synthase B.